The following is a 126-amino-acid chain: Phosphoribosyl-AMP cyclohydrolase (126 aa).

Residue Asp76 participates in Mg(2+) binding. Cys77 contributes to the Zn(2+) binding site. Mg(2+) contacts are provided by Asp78 and Asp80. Residues Cys94 and Cys101 each contribute to the Zn(2+) site.

It belongs to the PRA-CH family. Homodimer. Mg(2+) is required as a cofactor. Requires Zn(2+) as cofactor.

It localises to the cytoplasm. It catalyses the reaction 1-(5-phospho-beta-D-ribosyl)-5'-AMP + H2O = 1-(5-phospho-beta-D-ribosyl)-5-[(5-phospho-beta-D-ribosylamino)methylideneamino]imidazole-4-carboxamide. The protein operates within amino-acid biosynthesis; L-histidine biosynthesis; L-histidine from 5-phospho-alpha-D-ribose 1-diphosphate: step 3/9. In terms of biological role, catalyzes the hydrolysis of the adenine ring of phosphoribosyl-AMP. This chain is Phosphoribosyl-AMP cyclohydrolase, found in Vesicomyosocius okutanii subsp. Calyptogena okutanii (strain HA).